The sequence spans 202 residues: MPIEIPTDLTPELVPLSWLIGEWEGRGRLGTGDEDSEHFLQHVSFTHNGLPYLQYRAESWLTDDDGTRLRPLTVETGFWALERKQLDADGGPGLVPADIVPALKSADEVEALRNSEGGFDISVSISHPGGISELYYGQIKGPQIQLTTDMVMRGSHSKDYSAATRIFGLVDGNLLWRWDVATGGEAGKGLEAHASAFLARVS.

The GXWXGXG signature appears at 21-27 (GEWEGRG). A heme b-binding site is contributed by H193.

It belongs to the nitrobindin family. Homodimer. Requires heme b as cofactor.

It catalyses the reaction peroxynitrite = nitrate. Its pathway is nitrogen metabolism. Heme-binding protein able to scavenge peroxynitrite and to protect free L-tyrosine against peroxynitrite-mediated nitration, by acting as a peroxynitrite isomerase that converts peroxynitrite to nitrate. Therefore, this protein likely plays a role in peroxynitrite sensing and in the detoxification of reactive nitrogen and oxygen species (RNS and ROS, respectively). Is able to bind nitric oxide (NO) in vitro, but may act as a sensor of peroxynitrite levels in vivo. The chain is Peroxynitrite isomerase from Pseudarthrobacter chlorophenolicus (strain ATCC 700700 / DSM 12829 / CIP 107037 / JCM 12360 / KCTC 9906 / NCIMB 13794 / A6) (Arthrobacter chlorophenolicus).